We begin with the raw amino-acid sequence, 223 residues long: ATP phosphoribosyltransferase (223 aa).

Belongs to the ATP phosphoribosyltransferase family. Short subfamily. Heteromultimer composed of HisG and HisZ subunits.

It localises to the cytoplasm. The catalysed reaction is 1-(5-phospho-beta-D-ribosyl)-ATP + diphosphate = 5-phospho-alpha-D-ribose 1-diphosphate + ATP. The protein operates within amino-acid biosynthesis; L-histidine biosynthesis; L-histidine from 5-phospho-alpha-D-ribose 1-diphosphate: step 1/9. In terms of biological role, catalyzes the condensation of ATP and 5-phosphoribose 1-diphosphate to form N'-(5'-phosphoribosyl)-ATP (PR-ATP). Has a crucial role in the pathway because the rate of histidine biosynthesis seems to be controlled primarily by regulation of HisG enzymatic activity. The protein is ATP phosphoribosyltransferase of Bordetella pertussis (strain Tohama I / ATCC BAA-589 / NCTC 13251).